The sequence spans 632 residues: Armadillo repeat-containing X-linked protein 2 (632 aa).

The Mitochondrial intermembrane portion of the chain corresponds to 1-6 (MSRVRD). The segment at 1–6 (MSRVRD) is mitochondrion outer membrane (MOM)-targeting sequence. The helical; Signal-anchor transmembrane segment at 7 to 25 (AGCVAAGIVIGAGAWYCVY) threads the bilayer. Positions 26 to 40 (KYTRGRDQTKKRMAK) are mitochondrion outer membrane (MOM)-targeting sequence. Residues 26–632 (KYTRGRDQTK…VKVIKLVNKF (607 aa)) lie on the Cytoplasmic side of the membrane. Disordered regions lie at residues 68 to 124 (GFSP…AGVG), 160 to 304 (APKV…KVEV), and 335 to 369 (VPDS…RPVA). 2 stretches are compositionally biased toward low complexity: residues 86–120 (EASA…EADG) and 211–241 (VASP…SPGT). Residues 336–356 (PDSEEGESGWTDTESDSDSEP) show a composition bias toward acidic residues. ARM repeat units follow at residues 376–416 (PYEI…NNAN), 418–457 (SCNQ…NLSE), and 498–537 (ITND…NFAE).

The protein belongs to the eutherian X-chromosome-specific Armcx family. Expressed at high levels ovary, heart, testis, prostate, brain, spleen and colon. Expressed at very low levels in liver and thymus. Not expressed in peripheral blood leukocytes. Not expressed in pancreas and ovarian carcinomas.

Its subcellular location is the mitochondrion. It is found in the mitochondrion outer membrane. Functionally, may regulate the dynamics and distribution of mitochondria in neural cells. In Homo sapiens (Human), this protein is Armadillo repeat-containing X-linked protein 2 (ARMCX2).